A 152-amino-acid polypeptide reads, in one-letter code: SUZ RNA-binding domain-containing (152 aa).

Residues 28 to 152 (KISQRENNNT…DGSQGFRQGR (125 aa)) are disordered. The 66-residue stretch at 42 to 107 (RAPVVIQDDS…ARKRILGSAS (66 aa)) folds into the SUZ domain. Basic and acidic residues-rich tracts occupy residues 89–100 (AQREAEYAEARK) and 113–130 (EKPV…EEIR). Residues 111–152 (EQEKPVAERPARINQVEEIRQQNNVIRQPLGPDGSQGFRQGR) enclose the SUZ-C domain.

It belongs to the SZRD1 family.

This Xenopus laevis (African clawed frog) protein is SUZ RNA-binding domain-containing (szrd1).